Reading from the N-terminus, the 280-residue chain is Myelin proteolipid protein A (280 aa).

Residues 1-10 are Cytoplasmic-facing; that stretch reads MGWHDGCIRC. Residues Cys7 and Cys10 are each lipidated (S-palmitoyl cysteine). A helical membrane pass occupies residues 11–36; the sequence is MVGVPFASVIATVLCFAGVALFCGCG. Over 37-59 the chain is Extracellular; it reads HEALSGTEKLIETYFSKNYQEYE. Residues 60-88 traverse the membrane as a helical segment; the sequence is YLIHVINAFQYVIYGIAIFFFLFGILLLA. The Cytoplasmic portion of the chain corresponds to 89-152; sequence EGFYTTTAIK…LGKWLGHPDK (64 aa). 2 S-palmitoyl cysteine lipidation sites follow: Cys140 and Cys142. Residues 153 to 179 traverse the membrane as a helical segment; sequence FVGVTYIITILWILIFACSAVPVYIYF. The Extracellular portion of the chain corresponds to 180-239; sequence NTWVTCQSIAFPGKTTTSVSTLCSDARMYGVLPWNAFPGKVCGTSLLAICKTSEFQMTFH. Disulfide bonds link Cys185/Cys229 and Cys202/Cys221. The chain crosses the membrane as a helical span at residues 240-269; sequence LFIAAFVGAAATLVALLTYMVGASFNYAVL. Residues 270 to 280 lie on the Cytoplasmic side of the membrane; sequence RVTGRSDRSKF.

It belongs to the myelin proteolipid protein family.

Its subcellular location is the cell membrane. Functionally, this is the major myelin protein from the central nervous system. It plays an important role in the formation or maintenance of the multilamellar structure of myelin. This Xenopus laevis (African clawed frog) protein is Myelin proteolipid protein A (plp1-a).